Here is a 331-residue protein sequence, read N- to C-terminus: Tungstate uptake system ATP-binding protein TupC (331 aa).

Residues 2-230 (IEISNLFFNY…NQGVKFCNFI (229 aa)) form the ABC transporter domain. Residue 34-41 (GANGSGKS) coordinates ATP.

The protein belongs to the ABC transporter superfamily. As to quaternary structure, the complex is composed of two ATP-binding proteins (TupC), two transmembrane proteins (TupB) and a solute-binding protein (TupA).

The catalysed reaction is tungstate(in) + ATP + H2O = tungstate(out) + ADP + phosphate + H(+). Functionally, part of an ABC transporter complex involved in ultra-high affinity tungstate uptake. Probably responsible for energy coupling to the transport system. The chain is Tungstate uptake system ATP-binding protein TupC from Campylobacter jejuni subsp. jejuni serotype O:2 (strain ATCC 700819 / NCTC 11168).